The sequence spans 301 residues: Protoheme IX farnesyltransferase (301 aa).

Helical transmembrane passes span 16-36, 41-61, 93-113, 114-134, 141-161, 172-192, 217-237, 238-258, and 273-293; these read VVAL…PGIP, IQSG…AAAI, VFAG…VNLI, TAVL…VYLK, IVIG…AVTG, SLLV…LAIF, QILL…ATGM, SGVF…WYAW, and FGYS…DHWL.

It belongs to the UbiA prenyltransferase family. Protoheme IX farnesyltransferase subfamily.

It is found in the cell inner membrane. The catalysed reaction is heme b + (2E,6E)-farnesyl diphosphate + H2O = Fe(II)-heme o + diphosphate. The protein operates within porphyrin-containing compound metabolism; heme O biosynthesis; heme O from protoheme: step 1/1. Converts heme B (protoheme IX) to heme O by substitution of the vinyl group on carbon 2 of heme B porphyrin ring with a hydroxyethyl farnesyl side group. In Xylella fastidiosa (strain 9a5c), this protein is Protoheme IX farnesyltransferase.